Here is a 245-residue protein sequence, read N- to C-terminus: Protein canopy homolog 4 (245 aa).

An N-terminal signal peptide occupies residues 1–27; the sequence is MCGLRFIMGPVRLEILLFILAAYGAWA. 3 cysteine pairs are disulfide-bonded: Cys44/Cys202, Cys47/Cys190, and Cys100/Cys162. The disordered stretch occupies residues 207 to 245; the sequence is WTGKEKISDGQEEADDEEEEEEEEITKTSGNPKHDPEDL. The stretch at 209–237 forms a coiled coil; that stretch reads GKEKISDGQEEADDEEEEEEEEITKTSGN. Positions 216–230 are enriched in acidic residues; it reads GQEEADDEEEEEEEE.

Belongs to the canopy family. As to quaternary structure, interacts with TLR4. As to expression, highly expressed in lung, spleen, thymus, and uterus. Moderately expressed in kidney, stomach and placenta. Weakly expressed in brain, heart, liver, small intestine, skeletal muscle and testis.

The protein localises to the secreted. Plays a role in the regulation of the cell surface expression of TLR4. In Mus musculus (Mouse), this protein is Protein canopy homolog 4 (Cnpy4).